Consider the following 326-residue polypeptide: Protein BCCIP homolog (326 aa).

Residues 37–81 (SHPEDCQCSDEDISFDEKQKIPNLPRKGKEEQVSDSSDEEDSQED) form a disordered region. The residue at position 45 (S45) is a Phosphoserine. The span at 72 to 81 (SSDEEDSQED) shows a compositional bias: acidic residues.

The protein belongs to the BCP1 family.

The protein is Protein BCCIP homolog of Arabidopsis thaliana (Mouse-ear cress).